A 338-amino-acid chain; its full sequence is MKVYYDKDADLSLIKGKTVAIIGYGSQGHAHAQNLNDSGVKVVVGLRKGGASWPKVEKAGLKVAEVADAVKAADVVMILLPDEQIASVYKNDVAPNIKEGASLVFAHGFNVHYGFVQPRADLDVWMVAPKAPGHTVRSTYTQGGGVPHLVAVHQDKSGKARDLALSYATANGGGKAGIIETNFREETETDLFGEQAVLCGGTVELIKAGFETLVEAGYAPEMAYFECLHELKLIVDLIYEGGIANMNYSISNNAEYGEYVTGPRIVTEETKKVMKQVLKDIQTGEYAKSFVLENAAGAPTLISRRRLNSEHQIEVVGEKLRAMMPWIKKNKLVDQTRN.

A KARI N-terminal Rossmann domain is found at 1–181; that stretch reads MKVYYDKDAD…GGGKAGIIET (181 aa). NADP(+)-binding positions include 24–27, Arg47, and Ser52; that span reads YGSQ. His107 is an active-site residue. Gly133 lines the NADP(+) pocket. Positions 182–327 constitute a KARI C-terminal knotted domain; it reads NFREETETDL…EKLRAMMPWI (146 aa). The Mg(2+) site is built by Asp190, Glu194, Glu226, and Glu230. Ser251 is a substrate binding site.

This sequence belongs to the ketol-acid reductoisomerase family. Mg(2+) serves as cofactor.

It catalyses the reaction (2R)-2,3-dihydroxy-3-methylbutanoate + NADP(+) = (2S)-2-acetolactate + NADPH + H(+). The enzyme catalyses (2R,3R)-2,3-dihydroxy-3-methylpentanoate + NADP(+) = (S)-2-ethyl-2-hydroxy-3-oxobutanoate + NADPH + H(+). Its pathway is amino-acid biosynthesis; L-isoleucine biosynthesis; L-isoleucine from 2-oxobutanoate: step 2/4. The protein operates within amino-acid biosynthesis; L-valine biosynthesis; L-valine from pyruvate: step 2/4. Its function is as follows. Involved in the biosynthesis of branched-chain amino acids (BCAA). Catalyzes an alkyl-migration followed by a ketol-acid reduction of (S)-2-acetolactate (S2AL) to yield (R)-2,3-dihydroxy-isovalerate. In the isomerase reaction, S2AL is rearranged via a Mg-dependent methyl migration to produce 3-hydroxy-3-methyl-2-ketobutyrate (HMKB). In the reductase reaction, this 2-ketoacid undergoes a metal-dependent reduction by NADPH to yield (R)-2,3-dihydroxy-isovalerate. This is Ketol-acid reductoisomerase (NADP(+)) from Variovorax paradoxus (strain S110).